The chain runs to 396 residues: Mevalonate kinase (396 aa).

ATP is bound by residues Lys-13, Asn-55, Ser-135, and 140–146 (GAGLGSS). Ser-146 serves as the catalytic Proton donor. Ser-146 and Glu-193 together coordinate Mg(2+). Asp-204 serves as the catalytic Proton acceptor.

The protein belongs to the GHMP kinase family. Mevalonate kinase subfamily. As to quaternary structure, homodimer. Requires Mg(2+) as cofactor.

The protein resides in the cytoplasm. It localises to the peroxisome. The enzyme catalyses (R)-mevalonate + ATP = (R)-5-phosphomevalonate + ADP + H(+). Its pathway is isoprenoid biosynthesis; isopentenyl diphosphate biosynthesis via mevalonate pathway; isopentenyl diphosphate from (R)-mevalonate: step 1/3. Farnesyl pyrophosphate and geranyl pyrophosphate inhibit mevalonate kinase activity by binding competitively at the ATP-binding sites. Functionally, catalyzes the phosphorylation of mevalonate to mevalonate 5-phosphate, a key step in isoprenoid and cholesterol biosynthesis. The chain is Mevalonate kinase from Homo sapiens (Human).